The sequence spans 1061 residues: MAEVKKPFHEQVAERLIEQLKAGTAPWQKPWEPGMPGSFIPLNPTTGKRYKGINAIQLMAQGHADPRWMTYKQAAAAGAQVRRGEKGTPIQYWKFSEEQTKTDEQTGKPVLDANGDPVKVTVQLERPRVFFATVFNAEQIDGLPPLERKEQTWSAVERAEHILAASGATIRHGEHDRAFYRPSTDSIHLPDKGQFPSADNYYATALHELGHWTGHPSRLDRDLAHPFGSEGYAKEELRAEIASMILGDELGIGHDPGQHAAYVGSWIKALQEDPLEIFRAAADAEKIQDFVLAFEQKQIQEQTTQQAIEPAQGATMEQQQDQVARPAIAPADELIAQTLRMYRAGAEPAEGNQSLAALTETTLGFELPADWTGRVQVQANVEVEHDGERSVVPAGDREPEFWGVYANHAWGGHQWLADFAGPDAQTNAEALADRLAVIDAYATANEYEQAAKFARIHEERVRRDPNSTDEDRVAAKEARKAAEGTAMLHDEDLQRRIADYEREQQEMAQAMNAAEQPAAAQAPAKPERAYLNVPFKEKDEVKALGARWDRQERAWYVPAGVDPAPFAKWAREGATAAVEARAEAQPTQPTAERPNAAQERVYLAVPYGERQVAKAAGAQWDKVAKSWYAGPNADMGKLQRWLPDNVPTQQSPAVTPEDEFAEALKSMGCVVTPGGEHPIMDGKKHRIETEGDKKGEKSGFYVGHLDGHPAGYIKNNRTGVEMKWKAKGYALDPAEKAKMQAEAAAKLAARAEEQERQHEATAQRIGRQAQSLVPITEPTPYLRDKGLQVHAGVLTDQEGQKTYIPAYDADGKQWTMQYIQEDGTKRFAKDSRKEGCFHVVGGMDALAAAPALVIGEGYATAATVAEALGHATVAAFDSGNLQAVAEALHAKFPDKPVVIAGDDDRQVQITQGVNPGRTKAQEAAKAVGGKAIFPIFAPGENAYPKELPPITPENYRNHLHAEKRLADAAAGKVQLSEADTAKLKESLLNDGQLAALSNMKKHTDFNDLSERSSLGKDGVERQVRSAVGKVLLDEGQRQKVQQLKQQDIEQQEQRQRRARTY.

Residues 850-938 (PALVIGEGYA…GKAIFPIFAP (89 aa)) form the Toprim domain. The disordered stretch occupies residues 1034–1061 (EGQRQKVQQLKQQDIEQQEQRQRRARTY).

Required for autonomous replication in E.coli. Transferred into the recipient cell during bacterial conjugation. Catalyzes the synthesis of short oligoribonucleotide primers with CpA or pCpA at their 5'-termini on a single-stranded template DNA. This Escherichia coli protein is DNA primase TraC (traC).